The chain runs to 1179 residues: Putative ankyrin repeat protein RF_0381 (1179 aa).

ANK repeat units follow at residues 282-311 (NGYQSIHLVISGGNKGNIELQIRSTTMHRQ), 604-633 (NKDQLLRLGLQLGCVESVPLLITHGANPNA), 637-666 (HGVISLHCAAKNGNLDLAKLLAKNGADVNA), 670-699 (NGETVLHYAVKSGNLHLVKWLIENQANIHA), 703-732 (NGETVLHYAVSFNNSDLVYLLIAYGADVNA), 736-765 (NGLTALHYAVYDGNLDLVSLLISHGADVNA), 769-798 (SGETILYSAVDYGSPDLVYLLIAYGADVNA), 802-831 (NGETVLHYAVESGNLDLVSLLIHNGANVNN), 833-860 (KTILHFAAKSGNLNLVNWLIKNKADIHA), 864-893 (SGETILHFAAESGNLNLVNWLIKNKADIHA), 897-926 (SGETILHFAAKSGNLNLVNWLIKNKADIHA), 930-959 (SGETILHFAAKSGNLNLVNWLIKNKADIHA), 963-992 (SGETILHFAAESGNLNLVSLLIHNGTDINT), 996-1025 (DGLTALHYAVESGNLNLVSLLIHKGIDVNA), 1029-1058 (SGETILHFAVDLGSLDLVSLLMVRGADVNA), 1062-1091 (DGLTALHYAVESDNLALVSLLMVYGADVNA), 1095-1124 (SGETPLHYAVIFNSLDLVSLLIHNGADINT), and 1128-1157 (SGETVLNSIMEFNNCNILKSFILGGADINL).

This is Putative ankyrin repeat protein RF_0381 from Rickettsia felis (strain ATCC VR-1525 / URRWXCal2) (Rickettsia azadi).